A 521-amino-acid chain; its full sequence is Cyclic AMP-responsive element-binding protein 3-like protein 2 (521 aa).

The Cytoplasmic segment spans residues 1–378; the sequence is MEVLESGEQS…CKLAGTQTGT (378 aa). The residue at position 93 (serine 93) is a Phosphoserine. Lysine 178 participates in a covalent cross-link: Glycyl lysine isopeptide (Lys-Gly) (interchain with G-Cter in SUMO2). Serine 191 is subject to Phosphoserine. Positions 196 to 264 are disordered; that stretch reads SVDQLHLPPT…PHKLQGSGPL (69 aa). The span at 208-220 shows a compositional bias: low complexity; that stretch reads SSHSSDSEGSLSP. Residues 294–357 enclose the bZIP domain; sequence ALKKIRRKIK…RTLLQQLQKL (64 aa). The interval 296–325 is basic motif; that stretch reads KKIRRKIKNKISAQESRRKKKEYMDSLEKK. Residues 336–357 form a leucine-zipper region; the sequence is LRKKVEVLENTNRTLLQQLQKL. The chain crosses the membrane as a helical; Signal-anchor for type II membrane protein span at residues 379–399; sequence CLMVVVLCFAVAFGSLFQGYG. Residues 400–521 are Lumenal-facing; that stretch reads LYPSATKMAL…ELERRVNATF (122 aa). Residues 427–430 carry the S1P recognition motif; sequence RNLL. N-linked (GlcNAc...) asparagine glycans are attached at residues asparagine 505 and asparagine 518.

Belongs to the bZIP family. ATF subfamily. In terms of assembly, binds DNA as a dimer. Upon ER stress, translocated to the Golgi apparatus, where it is processed by regulated intramembrane proteolysis (RIP) to release the cytosol-facing N-terminal transcription factor domain. The cleavage is performed sequentially by site-1 and site-2 proteases (S1P/MBTPS1 and S2P/MBTPS2). In terms of processing, N-glycosylated. Post-translationally, ubiquitinated by HRD1/SYVN1; undergoes 'Lys-48'-linked ubiquitination, followed by rapid proteasomal degradation under normal conditions. Upon ER stress, SYVN1 E3 ubiquitin-protein ligase dissociates from its substrate, ubiquitination does not occur and CREB3L2 is stabilized.

It localises to the endoplasmic reticulum membrane. It is found in the nucleus. Transcription factor involved in unfolded protein response (UPR). In the absence of endoplasmic reticulum (ER) stress, inserted into ER membranes, with N-terminal DNA-binding and transcription activation domains oriented toward the cytosolic face of the membrane. In response to ER stress, transported to the Golgi, where it is cleaved in a site-specific manner by resident proteases S1P/MBTPS1 and S2P/MBTPS2. The released N-terminal cytosolic domain is translocated to the nucleus to effect transcription of specific target genes. Plays a critical role in chondrogenesis by activating the transcription of SEC23A, which promotes the transport and secretion of cartilage matrix proteins, and possibly that of ER biogenesis-related genes. In a neuroblastoma cell line, protects cells from ER stress-induced death. In vitro activates transcription of target genes via direct binding to the CRE site. The chain is Cyclic AMP-responsive element-binding protein 3-like protein 2 (Creb3l2) from Rattus norvegicus (Rat).